The primary structure comprises 1224 residues: DNA-directed RNA polymerase subunit beta'' (1224 aa).

Zn(2+) is bound by residues Cys-233, Cys-308, Cys-315, and Cys-318.

This sequence belongs to the RNA polymerase beta' chain family. RpoC2 subfamily. As to quaternary structure, in plastids the minimal PEP RNA polymerase catalytic core is composed of four subunits: alpha, beta, beta', and beta''. When a (nuclear-encoded) sigma factor is associated with the core the holoenzyme is formed, which can initiate transcription. Zn(2+) serves as cofactor.

It is found in the plastid. The protein resides in the chloroplast. It catalyses the reaction RNA(n) + a ribonucleoside 5'-triphosphate = RNA(n+1) + diphosphate. In terms of biological role, DNA-dependent RNA polymerase catalyzes the transcription of DNA into RNA using the four ribonucleoside triphosphates as substrates. The chain is DNA-directed RNA polymerase subunit beta'' from Pinus thunbergii (Japanese black pine).